The following is a 274-amino-acid chain: Large ribosomal subunit protein uL2c (274 aa).

The segment at 230–252 is disordered; sequence HPHGGGEGRSPIGRSKPLTPWGK.

The protein belongs to the universal ribosomal protein uL2 family. In terms of assembly, part of the 50S ribosomal subunit.

Its subcellular location is the plastid. This Euglena longa (Euglenophycean alga) protein is Large ribosomal subunit protein uL2c (rpl2).